A 379-amino-acid chain; its full sequence is MTNIRKSHPIAKIMNESFIDLPAPSNISAWWNFGSLLGICLILQILTGLFLAMHYSSDTMTAFSSVTHICRDVNHGWMIRYMHANGASLFFICLFMHVGRGVYYGSYTFSETWNIGILLLLTVMATAFMGYVLPWGQMSFWGATVITNLLSAIPYIGTNLVEWIWGGFSVDKATLTRFFAFHFILPFIISALAAVHLLFLHETGSNNPSGMMSDSDKIPFHPYYTIKDILGLLFLILALMLLVLFSPDLLGDPDNYTPANPLNTPPHIKPEWYFLFAYAILRSIPNKLGGVLPHAMSILILPIIPMLHTSKQRSIMFRPLSQCMFWLLVADLPILTWIGGQPVEYPFITIGQLASVYISSILLXLMPIFGIIENHSVKW.

A run of 4 helical transmembrane segments spans residues F33 to M53, W77 to V98, W113 to L133, and F178 to L198. Heme b contacts are provided by H83 and H97. H182 and H196 together coordinate heme b. An a ubiquinone-binding site is contributed by H201. 4 consecutive transmembrane segments (helical) span residues I226–S246, L288–H308, L320–G340, and F347–P367.

Belongs to the cytochrome b family. The cytochrome bc1 complex contains 11 subunits: 3 respiratory subunits (MT-CYB, CYC1 and UQCRFS1), 2 core proteins (UQCRC1 and UQCRC2) and 6 low-molecular weight proteins (UQCRH/QCR6, UQCRB/QCR7, UQCRQ/QCR8, UQCR10/QCR9, UQCR11/QCR10 and a cleavage product of UQCRFS1). This cytochrome bc1 complex then forms a dimer. Requires heme b as cofactor.

Its subcellular location is the mitochondrion inner membrane. Functionally, component of the ubiquinol-cytochrome c reductase complex (complex III or cytochrome b-c1 complex) that is part of the mitochondrial respiratory chain. The b-c1 complex mediates electron transfer from ubiquinol to cytochrome c. Contributes to the generation of a proton gradient across the mitochondrial membrane that is then used for ATP synthesis. The polypeptide is Cytochrome b (MT-CYB) (Chrotogale owstoni (Owston's palm civet)).